A 106-amino-acid chain; its full sequence is ATP-dependent Clp protease adapter protein ClpS (106 aa).

It belongs to the ClpS family. Binds to the N-terminal domain of the chaperone ClpA.

Involved in the modulation of the specificity of the ClpAP-mediated ATP-dependent protein degradation. The sequence is that of ATP-dependent Clp protease adapter protein ClpS from Methylococcus capsulatus (strain ATCC 33009 / NCIMB 11132 / Bath).